The following is a 610-amino-acid chain: ABC transporter ATP-binding protein ARB1 (610 aa).

The disordered stretch occupies residues 1-43 (MPPVSASKAKRDAKKAEREAKKAAAGKTIRKLGRKKEAAAEES). Phosphoserine is present on residues S43 and S65. ABC transporter domains follow at residues 82–323 (IKLS…TNQM) and 393–610 (LAFD…NVVL). Residue 114-121 (GENGCGKS) coordinates ATP. S196 carries the post-translational modification Phosphoserine. 428–435 (GPNGVGKS) is a binding site for ATP. The residue at position 446 (T446) is a Phosphothreonine.

The protein belongs to the ABC transporter superfamily. ABCF family. EF3 subfamily. As to quaternary structure, interacts with LSG1.

Its subcellular location is the cytoplasm. It is found in the nucleus. The enzyme catalyses ATP + H2O = ADP + phosphate + H(+). ATPase that stimulates 40S and 60S ribosome biogenesis. Also involved in ribosome-associated quality control (RQC) pathway, a pathway that mediates ubiquitination and extraction of incompletely synthesized nascent chains for proteasomal degradation: localizes to the ribosomal E-site and stimulates VMS1-dependent tRNA cleavage. The sequence is that of ABC transporter ATP-binding protein ARB1 (ARB1) from Saccharomyces cerevisiae (strain ATCC 204508 / S288c) (Baker's yeast).